We begin with the raw amino-acid sequence, 226 residues long: MKEIIHNSWQNILSAEFEKPYYQELREFLKKEYQTQTIYPDMYHLFSALELTPFEEVKVVILGQDPYHGPNQAHGLSFSVQPGVKVPPSLANIYKELQADLGYQPVNHGFLESWAKQGVLLLNTVLTVRAGQAYSHRGKGWEQLTDVIIEKLNEREKPVVFILWGRPAQEKIKMIDTTRHVIIKSPHPSPLSAHRGFFGSRPFSQANAALERLGETPIDWQLPETV.

The active-site Proton acceptor is Asp65.

It belongs to the uracil-DNA glycosylase (UDG) superfamily. UNG family.

The protein resides in the cytoplasm. It carries out the reaction Hydrolyzes single-stranded DNA or mismatched double-stranded DNA and polynucleotides, releasing free uracil.. Its function is as follows. Excises uracil residues from the DNA which can arise as a result of misincorporation of dUMP residues by DNA polymerase or due to deamination of cytosine. This chain is Uracil-DNA glycosylase, found in Enterococcus faecalis (strain ATCC 700802 / V583).